We begin with the raw amino-acid sequence, 402 residues long: Serine/threonine-protein kinase US3 homolog (402 aa).

Disordered regions lie at residues 1–21 (MSST…KVHD) and 46–88 (FPDS…SPET). Positions 102–386 (YNIVSSLPPG…AQDILMLPLF (285 aa)) constitute a Protein kinase domain. ATP-binding positions include 110-118 (PGSEGYIYV) and K127. The active-site Proton acceptor is the D218.

This sequence belongs to the protein kinase superfamily. Ser/Thr protein kinase family. In terms of processing, phosphorylated by UL13 homolog; this phosphorylation regulates subsequent phosphorylation of UL31 and UL34 homologs by US3. Autophosphorylated.

Its subcellular location is the host cytoplasm. It localises to the host nucleus. The catalysed reaction is L-seryl-[protein] + ATP = O-phospho-L-seryl-[protein] + ADP + H(+). It catalyses the reaction L-threonyl-[protein] + ATP = O-phospho-L-threonyl-[protein] + ADP + H(+). Its function is as follows. Multifunctional serine/threonine kinase that plays a role in several processes including egress of virus particles from the nucleus, modulation of the actin cytoskeleton and inhibition of apoptosis. Phosphorylates UL31 and UL34 homologs, two critical regulators of capsid budding from nucleus to endoplasmic reticulum, thereby facilitating virion egress. Modulates and redistributes host components of the nuclear envelope, including LMNA, emerin/EMD and the nuclear matrix protein MATR3. Phosphorylates envelope glycoprotein B (gB), probably to direct it to the cell surface. Promotes virus intracellular spread by restructuring host cell cytoskeleton. Blocks host apoptosis to extend cell survival and allow efficient viral replication. Promotes viral gene expression by phosphorylating host HDAC2 to reduce viral genome silencing. This chain is Serine/threonine-protein kinase US3 homolog (US1206), found in Gallid herpesvirus 2 (strain GA) (GaHV-2).